A 224-amino-acid polypeptide reads, in one-letter code: Oxygen-evolving enhancer protein 3-1, chloroplastic (224 aa).

A chloroplast-targeting transit peptide spans 1-44 (MASMGGLHGASPAVLEGSLKINGSSRLNGSGRVAVAQRSRLVVR). A thylakoid-targeting transit peptide spans 45–75 (AQQSEETSRRSVIGLVAAGLAGGSFVQAVLA). Threonine 189 carries the phosphothreonine modification. Position 209 is a phosphotyrosine (tyrosine 209). Threonine 212 is modified (phosphothreonine).

Belongs to the PsbQ family. As to expression, expressed in green tissue, with high steady-state mRNA levels in leaves. Not expressed in roots.

It is found in the plastid. Its subcellular location is the chloroplast thylakoid membrane. In terms of biological role, required for photosystem II assembly/stability and photoautotrophic growth under low light conditions. This Arabidopsis thaliana (Mouse-ear cress) protein is Oxygen-evolving enhancer protein 3-1, chloroplastic (PSBQ1).